Consider the following 653-residue polypeptide: Macrolide export ATP-binding/permease protein MacB (653 aa).

An ABC transporter domain is found at 6–244 (LQLTRVTRRF…DAASGASGDA (239 aa)). Residue 42-49 (GASGSGKS) coordinates ATP. A run of 4 helical transmembrane segments spans residues 278–298 (LLTM…VAIG), 526–546 (LTLL…IGVM), 587–607 (MGGA…SLFV), and 616–636 (AGSI…FGFM).

The protein belongs to the ABC transporter superfamily. Macrolide exporter (TC 3.A.1.122) family. Homodimer.

The protein localises to the cell inner membrane. Its function is as follows. Non-canonical ABC transporter that contains transmembrane domains (TMD), which form a pore in the inner membrane, and an ATP-binding domain (NBD), which is responsible for energy generation. Confers resistance against macrolides. This Burkholderia thailandensis (strain ATCC 700388 / DSM 13276 / CCUG 48851 / CIP 106301 / E264) protein is Macrolide export ATP-binding/permease protein MacB.